The primary structure comprises 126 residues: Small ribosomal subunit protein eS6 (126 aa).

The protein belongs to the eukaryotic ribosomal protein eS6 family.

The chain is Small ribosomal subunit protein eS6 from Thermococcus sibiricus (strain DSM 12597 / MM 739).